A 223-amino-acid polypeptide reads, in one-letter code: MRLVIARCSVDYAGRLTAHLPSAPRLILVKADGSVSIHADDRAYKPLNWMSPPCTLKEGADGEAGVWTVVNKAGEKLIITMEEVLHDSSYELGVDPGLIKDGVEAHLQELLADRIEILGEGHTLIRREYPTAIGPVDILCRDANGQTVAVELKRRGDIDGVEQLTRYLELLNRDPHLAPVRGVFAAQEIKPQARVLATDRGIGCLVLDYDAMRGIEDDKLRLF.

It belongs to the NucS endonuclease family.

The protein resides in the cytoplasm. In terms of biological role, cleaves both 3' and 5' ssDNA extremities of branched DNA structures. This chain is Endonuclease NucS, found in Streptomyces griseus subsp. griseus (strain JCM 4626 / CBS 651.72 / NBRC 13350 / KCC S-0626 / ISP 5235).